Reading from the N-terminus, the 179-residue chain is Ribosome maturation factor RimM (179 aa).

The PRC barrel domain occupies glutamate 103–leucine 176.

Belongs to the RimM family. Binds ribosomal protein uS19.

The protein localises to the cytoplasm. In terms of biological role, an accessory protein needed during the final step in the assembly of 30S ribosomal subunit, possibly for assembly of the head region. Essential for efficient processing of 16S rRNA. May be needed both before and after RbfA during the maturation of 16S rRNA. It has affinity for free ribosomal 30S subunits but not for 70S ribosomes. This chain is Ribosome maturation factor RimM, found in Mycobacterium leprae (strain Br4923).